The primary structure comprises 515 residues: Spermatogenesis-associated protein 2 (515 aa).

In terms of domain architecture, PUB spans 78-150; it reads ALHCAFSMLE…VYKLKELVES (73 aa). Residues 321 to 338 carry the PIM motif motif; it reads TYFSTQDDVDLYTDSEPR. A disordered region spans residues 429–452; it reads GHQTQGLDRLAPVHSKPKPSTTAT.

The protein belongs to the SPATA2 family. In terms of assembly, interacts (via the PIM motif) with RNF31/HOIP (via the PUB domain); the interaction is direct. Interacts (via the PUB domain) with CYLD; the interaction is direct. Widely expressed, with highest expression in testis, lung and intestine, and lower expression in brain, heart and spleen. Present at high level in Sertoli cells: expressed from stage I to stage XII of the testis seminiferous epithelium (at protein level).

It localises to the cytoplasm. Its subcellular location is the nucleus. Functionally, bridging factor that mediates the recruitment of CYLD to the LUBAC complex, thereby regulating TNF-alpha-induced necroptosis. Acts as a direct binding intermediate that bridges RNF31/HOIP, the catalytic subunit of the LUBAC complex, and the deubiquitinase (CYLD), thereby recruiting CYLD to the TNF-R1 signaling complex (TNF-RSC). Required to activate the 'Met-1'- (linear) and 'Lys-63'-linked deubiquitinase activities of CYLD. Controls the kinase activity of RIPK1 and TNF-alpha-induced necroptosis by promoting 'Met-1'-linked deubiquitination of RIPK1 by CYLD. This chain is Spermatogenesis-associated protein 2, found in Mus musculus (Mouse).